Reading from the N-terminus, the 88-residue chain is Small ribosomal subunit protein bS20 (88 aa).

The interval 1–28 is disordered; it reads MANIKSQIKRNRQNEKRRLRNKSVKSSL. The segment covering 7-23 has biased composition (basic residues); it reads QIKRNRQNEKRRLRNKS.

This sequence belongs to the bacterial ribosomal protein bS20 family.

In terms of biological role, binds directly to 16S ribosomal RNA. The protein is Small ribosomal subunit protein bS20 of Salinispora tropica (strain ATCC BAA-916 / DSM 44818 / JCM 13857 / NBRC 105044 / CNB-440).